The sequence spans 350 residues: MIRVLLVDDSPVTLMVLQSILEKEPDISVIGQAKNGKEAIILASRLAPDIITMDINMPDLDGFATTRQIMERTPVPIIIVSGIDNLEEIRASFRAVEAGALAVFRKPPAYGDPDYEEAVSEFVNAIRTYSEVKVIRRRSNHLKVPKPEASTIQIPFQIHQDIRVIVIGASTGGPQVIQEIISNLPLGFPLPLVLVQHMSPGFIEGLALWLTESTGFPVSIAREGEVLQPGKLYVAPDGIHTGVTSDLRFSFSISPPEHNLRPSVSYLFRSAAKNLGSHVLGILLSGMGSDGAEELLQIRQNGGCTIIQDRDSSFVYGMPGAAEMLNAGMFSLPPVEIARFLRSLSERRQL.

One can recognise a Response regulatory domain in the interval 3–121 (RVLLVDDSPV…DPDYEEAVSE (119 aa)). Position 54 is a 4-aspartylphosphate (Asp54). Residues 158 to 322 (IHQDIRVIVI…SFVYGMPGAA (165 aa)) enclose the CheB-type methylesterase domain. Catalysis depends on residues Ser170, His197, and Asp290.

It belongs to the CheB family. In terms of processing, phosphorylated by CheA. Phosphorylation of the N-terminal regulatory domain activates the methylesterase activity.

It is found in the cytoplasm. It catalyses the reaction [protein]-L-glutamate 5-O-methyl ester + H2O = L-glutamyl-[protein] + methanol + H(+). The catalysed reaction is L-glutaminyl-[protein] + H2O = L-glutamyl-[protein] + NH4(+). Involved in chemotaxis. Part of a chemotaxis signal transduction system that modulates chemotaxis in response to various stimuli. Catalyzes the demethylation of specific methylglutamate residues introduced into the chemoreceptors (methyl-accepting chemotaxis proteins or MCP) by CheR. Also mediates the irreversible deamidation of specific glutamine residues to glutamic acid. This Methanospirillum hungatei JF-1 (strain ATCC 27890 / DSM 864 / NBRC 100397 / JF-1) protein is Protein-glutamate methylesterase/protein-glutamine glutaminase 2.